The following is a 570-amino-acid chain: MSEKHPGPLVVEGKLSDAERMKLESNYLRGTIAEDLNDGLTGGFKGDNFLLIRFHGMYQQDDRDIRAERAAQKLEPRHAMLLRCRLPGGVITTTQWQAIDKFAADNTIYGSIRLTNRQTFQFHGILKKNVKPVHQMLHSVGLDALATANDMNRNVLCTSNPYESQLHAEAYEWAKKISEHLLPRTRAYAEIWLDQEKVATTDEEPILGQTYLPRKFKTTVVIPPQNDIDLHANDMNFVAIAENGKLVGFNLLVGGGLSIEHGNKKTYARTASEFGYLPLEHTLAVAEAVVTTQRDWGNRTDRKNAKTKYTLERVGLETFKAEVERRAGIKFEPIRPYEFTGRGDRIGWVKGIDNNWHLTLFIENGRILDYPGRPLKTGLLEIAKIHQGEFRITANQNLIIASVPESQKAKIEKLARDHGLMNAVSAQRENSMACVSFPTCPLAMAEAERFLPSFTDKVEAILEKHGIPDEHIVMRVTGCPNGCGRAMLAELGLVGKAPGRYNVHLGGNRMGTRIPRMYRENITESEILDSVDELVGRWAKEREAGEGFGDFTVRAGIIRPVLDPARDFWE.

[4Fe-4S] cluster is bound by residues Cys434, Cys440, Cys479, and Cys483. Cys483 contributes to the siroheme binding site.

Belongs to the nitrite and sulfite reductase 4Fe-4S domain family. As to quaternary structure, alpha(8)-beta(8). The alpha component is a flavoprotein, the beta component is a hemoprotein. The cofactor is siroheme. It depends on [4Fe-4S] cluster as a cofactor.

The catalysed reaction is hydrogen sulfide + 3 NADP(+) + 3 H2O = sulfite + 3 NADPH + 4 H(+). The protein operates within sulfur metabolism; hydrogen sulfide biosynthesis; hydrogen sulfide from sulfite (NADPH route): step 1/1. In terms of biological role, component of the sulfite reductase complex that catalyzes the 6-electron reduction of sulfite to sulfide. This is one of several activities required for the biosynthesis of L-cysteine from sulfate. This chain is Sulfite reductase [NADPH] hemoprotein beta-component, found in Salmonella paratyphi B (strain ATCC BAA-1250 / SPB7).